Reading from the N-terminus, the 77-residue chain is MASLMQVRDCVALNGRADARLVSHQLNMPEPMVKAMLERLTLMGKLEEVDVEECLVGSCKSCPEATACQTKVYQLRS.

Iron-sulfur cluster is bound by residues cysteine 54, cysteine 59, cysteine 62, and cysteine 68.

This sequence belongs to the FeoC family.

May function as a transcriptional regulator that controls feoABC expression. This is Probable [Fe-S]-dependent transcriptional repressor from Proteus mirabilis (strain HI4320).